Consider the following 1879-residue polypeptide: Protein TIC 214 (1879 aa).

Helical transmembrane passes span 18–38 (IINS…FSIG), 67–87 (FITG…HLAL), 90–110 (PHTI…WNNH), 127–147 (LSIQ…HFIL), 175–195 (VGWL…LVWI), and 218–238 (IFSI…PSPI). A disordered region spans residues 243–291 (LKETEERGESEEERDVEKTSETKGTKQEQEGSTEEDPSPSLFSEEKEDP). The segment covering 257–271 (DVEKTSETKGTKQEQ) has biased composition (basic and acidic residues).

Belongs to the TIC214 family. Part of the Tic complex.

Its subcellular location is the plastid. It localises to the chloroplast inner membrane. Functionally, involved in protein precursor import into chloroplasts. May be part of an intermediate translocation complex acting as a protein-conducting channel at the inner envelope. This chain is Protein TIC 214, found in Morus indica (Mulberry).